A 291-amino-acid chain; its full sequence is Hydroxysteroid 11-beta-dehydrogenase 1-like protein B (291 aa).

Residues 1–17 (MAGVILLLLSLCVGYIA) form the signal peptide. Residues 40–66 (GSST…TARR), 91–92 (DM), and 118–120 (NHI) contribute to the NADP(+) site. Substrate is bound at residue serine 170. Tyrosine 183 (proton acceptor) is an active-site residue. NADP(+)-binding positions include 183 to 187 (YCASK) and 216 to 222 (GYIDTEN).

Belongs to the short-chain dehydrogenases/reductases (SDR) family.

The protein resides in the secreted. The enzyme catalyses cortisone + NADPH + H(+) = cortisol + NADP(+). Unidirectional NADP(+)-dependent cortisol dehydrogenase (in vitro). The polypeptide is Hydroxysteroid 11-beta-dehydrogenase 1-like protein B (hsd11b1l-b) (Xenopus laevis (African clawed frog)).